We begin with the raw amino-acid sequence, 570 residues long: PTS system lactose-specific EIICB component (570 aa).

One can recognise a PTS EIIC type-3 domain in the interval 9 to 410; that stretch reads IEKGKPFFEK…VVDIIIYYPF (402 aa). A run of 9 helical transmembrane segments spans residues 31 to 51, 65 to 85, 104 to 124, 133 to 153, 178 to 198, 223 to 243, 283 to 303, 340 to 360, and 382 to 402; these read GFIS…IAYV, AILM…VAGT, INFI…ASDP, AFMG…TVIV, FKDL…DLVI, GWIG…VGIH, MFIV…MFMW, VFFI…KLFV, and IIMG…LIVV. Residues 467–570 enclose the PTS EIIB type-3 domain; the sequence is QTNVLVLCAG…LDFVQQQFEN (104 aa). The Phosphocysteine intermediate; for EIIB activity role is filled by Cys-474. Cys-474 bears the Phosphocysteine; by EIIA mark.

The protein resides in the cell membrane. It carries out the reaction lactose(out) + N(pros)-phospho-L-histidyl-[protein] = lactose 6-phosphate(in) + L-histidyl-[protein]. Functionally, the phosphoenolpyruvate-dependent sugar phosphotransferase system (sugar PTS), a major carbohydrate active transport system, catalyzes the phosphorylation of incoming sugar substrates concomitantly with their translocation across the cell membrane. The enzyme II LacEF PTS system is involved in lactose transport, but can also use galactose, isopropyl beta-thio-galactopyranoside and thiomethyl beta-D-galactopyranoside (TMG) as substrates. The polypeptide is PTS system lactose-specific EIICB component (Staphylococcus aureus).